The sequence spans 488 residues: UDP-N-acetylmuramate--L-alanine ligase (488 aa).

129–135 (GSHGKTT) serves as a coordination point for ATP.

The protein belongs to the MurCDEF family.

The protein localises to the cytoplasm. The catalysed reaction is UDP-N-acetyl-alpha-D-muramate + L-alanine + ATP = UDP-N-acetyl-alpha-D-muramoyl-L-alanine + ADP + phosphate + H(+). The protein operates within cell wall biogenesis; peptidoglycan biosynthesis. Cell wall formation. The polypeptide is UDP-N-acetylmuramate--L-alanine ligase (Prochlorococcus marinus (strain MIT 9303)).